The primary structure comprises 194 residues: Peptidyl-tRNA hydrolase (194 aa).

Y17 is a tRNA binding site. The active-site Proton acceptor is H22. Residues F68, N70, and N116 each contribute to the tRNA site.

Belongs to the PTH family. In terms of assembly, monomer.

It localises to the cytoplasm. It carries out the reaction an N-acyl-L-alpha-aminoacyl-tRNA + H2O = an N-acyl-L-amino acid + a tRNA + H(+). Hydrolyzes ribosome-free peptidyl-tRNAs (with 1 or more amino acids incorporated), which drop off the ribosome during protein synthesis, or as a result of ribosome stalling. Functionally, catalyzes the release of premature peptidyl moieties from peptidyl-tRNA molecules trapped in stalled 50S ribosomal subunits, and thus maintains levels of free tRNAs and 50S ribosomes. The protein is Peptidyl-tRNA hydrolase of Glaesserella parasuis serovar 5 (strain SH0165) (Haemophilus parasuis).